The following is an 834-amino-acid chain: Prominin-2 (834 aa).

Residues 1–26 form the signal peptide; sequence MKHTLALLAPLLGLGLGLALSQLAAG. Residues 27–106 are Extracellular-facing; it reads ATDCKFLGPA…NEVVRYEAGY (80 aa). The helical transmembrane segment at 107–127 threads the bilayer; that stretch reads VVCAVIAGLYLLLVPTAGLCF. Residues 128-153 lie on the Cytoplasmic side of the membrane; sequence CCCRCHRRCGGRVKTEHKALACERAA. A helical transmembrane segment spans residues 154–174; that stretch reads LMVFLLLTTLLLLIGVVCAFV. At 175 to 426 the chain is on the extracellular side; sequence TNQRTHEQMG…EVQRYETYRW (252 aa). N-linked (GlcNAc...) asparagine glycosylation occurs at asparagine 270. The helical transmembrane segment at 427–447 threads the bilayer; it reads IVGCVLCSVVLFVVLCNLLGL. At 448-472 the chain is on the cytoplasmic side; sequence NLGIWGLSARDDPSHPEAKGEAGAR. Residues 473–493 traverse the membrane as a helical segment; it reads FLMAGVGLSFLFAAPLILLVF. Residues 494 to 779 are Extracellular-facing; the sequence is ATFLVGGNVQ…LCDMMADPWN (286 aa). Phosphoserine is present on serine 727. Residues 780–800 traverse the membrane as a helical segment; sequence AFWFCLAWCTFFLIPSIIFAV. Residues 801-834 are Cytoplasmic-facing; the sequence is KTSKYFRPIRKRLSSTSSEETQLFHIPRVTSLKL. Serine 818 bears the Phosphoserine mark.

It belongs to the prominin family. Binds cholesterol. Post-translationally, glycosylated. Present in saliva within small membrane particles (at protein level). Expressed in kidney, prostate, trachea, esophagus, salivary gland, thyroid gland, mammary gland adrenal gland, placenta, stomach, spinal cord and liver. In submucosal tumor, expressed in spindle-shaped or stellate stromal cells. Expressed in prostate cancer cell lines.

It is found in the apical cell membrane. The protein resides in the basolateral cell membrane. The protein localises to the cell projection. It localises to the microvillus membrane. Its subcellular location is the cilium membrane. The protein is Prominin-2 (PROM2) of Homo sapiens (Human).